We begin with the raw amino-acid sequence, 426 residues long: 3-phosphoshikimate 1-carboxyvinyltransferase (426 aa).

Positions 22, 23, and 27 each coordinate 3-phosphoshikimate. K22 provides a ligand contact to phosphoenolpyruvate. Phosphoenolpyruvate contacts are provided by G96 and R124. 7 residues coordinate 3-phosphoshikimate: S170, S171, Q172, S198, D314, N337, and K341. Q172 contacts phosphoenolpyruvate. The active-site Proton acceptor is the D314. Residues R345, R387, and K412 each contribute to the phosphoenolpyruvate site.

It belongs to the EPSP synthase family. As to quaternary structure, monomer.

Its subcellular location is the cytoplasm. The enzyme catalyses 3-phosphoshikimate + phosphoenolpyruvate = 5-O-(1-carboxyvinyl)-3-phosphoshikimate + phosphate. It functions in the pathway metabolic intermediate biosynthesis; chorismate biosynthesis; chorismate from D-erythrose 4-phosphate and phosphoenolpyruvate: step 6/7. In terms of biological role, catalyzes the transfer of the enolpyruvyl moiety of phosphoenolpyruvate (PEP) to the 5-hydroxyl of shikimate-3-phosphate (S3P) to produce enolpyruvyl shikimate-3-phosphate and inorganic phosphate. This Colwellia psychrerythraea (strain 34H / ATCC BAA-681) (Vibrio psychroerythus) protein is 3-phosphoshikimate 1-carboxyvinyltransferase.